Reading from the N-terminus, the 288-residue chain is MASLKEIDTRIKSTKKMKQITKAMNMVSSSKLRRAEKNTKQFTPYMDKMQDAITAVAGASSNTNHPMLRPRKITRSGYLVITSDKGLAGAYSANVLKKLITDIEAKHQDSSEYGIVVLGQQGVDFLKNRGYDIEYSQVDVPDQPSFKSVQALANHAIDLYSEEEIDELNIYYSHYVSVLENKPTSRQVLPLSQEDSSKGHGHLSSYEFEPDKESILSVILPQYVESLIYGTILDAKASEHATRMTAMKNATDNATELIDDLSLEYNRARQAEITQQITEIVGGSAALE.

It belongs to the ATPase gamma chain family. In terms of assembly, F-type ATPases have 2 components, CF(1) - the catalytic core - and CF(0) - the membrane proton channel. CF(1) has five subunits: alpha(3), beta(3), gamma(1), delta(1), epsilon(1). CF(0) has three main subunits: a, b and c.

The protein localises to the cell membrane. Its function is as follows. Produces ATP from ADP in the presence of a proton gradient across the membrane. The gamma chain is believed to be important in regulating ATPase activity and the flow of protons through the CF(0) complex. The protein is ATP synthase gamma chain of Staphylococcus aureus (strain bovine RF122 / ET3-1).